Consider the following 357-residue polypeptide: Molybdenum import ATP-binding protein ModC (357 aa).

The ABC transporter domain occupies 1-233; it reads MRLEVEARLR…PFPTSGPGRR (233 aa). 31 to 38 is an ATP binding site; it reads GRSGSGKT. The Mop domain maps to 293–357; sequence GISALNVLPG…AVVKTVALDY (65 aa).

It belongs to the ABC transporter superfamily. Molybdate importer (TC 3.A.1.8) family. In terms of assembly, the complex is composed of two ATP-binding proteins (ModC), two transmembrane proteins (ModB) and a solute-binding protein (ModA).

It localises to the cell inner membrane. It carries out the reaction molybdate(out) + ATP + H2O = molybdate(in) + ADP + phosphate + H(+). In terms of biological role, part of the ABC transporter complex ModABC involved in molybdenum import. Responsible for energy coupling to the transport system. This chain is Molybdenum import ATP-binding protein ModC, found in Rhizobium meliloti (strain 1021) (Ensifer meliloti).